The sequence spans 89 residues: Small ribosomal subunit protein uS14 (89 aa).

It belongs to the universal ribosomal protein uS14 family. In terms of assembly, part of the 30S ribosomal subunit. Contacts proteins S3 and S10.

Its function is as follows. Binds 16S rRNA, required for the assembly of 30S particles and may also be responsible for determining the conformation of the 16S rRNA at the A site. This is Small ribosomal subunit protein uS14 from Latilactobacillus sakei subsp. sakei (strain 23K) (Lactobacillus sakei subsp. sakei).